Reading from the N-terminus, the 115-residue chain is Promotilin (115 aa).

Residues 1 to 25 (MVSRKAVAALLVVHVAAMLASQTEA) form the signal peptide. Residues 39–72 (QEKERNKGQKKSLSVWQRSGEEGPVDPAEPIREE) form a disordered region.

Belongs to the motilin family.

It localises to the secreted. Its function is as follows. Plays an important role in the regulation of interdigestive gastrointestinal motility and indirectly causes rhythmic contraction of duodenal and colonic smooth muscle. The sequence is that of Promotilin (MLN) from Homo sapiens (Human).